A 468-amino-acid polypeptide reads, in one-letter code: Tissue alpha-L-fucosidase (468 aa).

The signal sequence occupies residues 1-22; it reads MRSWVVGARLLLLLQLVLVLGA. Thr-173 carries the phosphothreonine modification. N-linked (GlcNAc...) asparagine glycosylation is found at Asn-244, Asn-271, and Asn-320.

This sequence belongs to the glycosyl hydrolase 29 family. In terms of assembly, homotetramer.

Its subcellular location is the lysosome. It catalyses the reaction an alpha-L-fucoside + H2O = L-fucose + an alcohol. The catalysed reaction is a neolactoside IV(2)-alpha-Fuc-nLc4Cer(d18:1(4E)) + H2O = a neolactoside nLc4Cer(d18:1(4E)) + L-fucose. The enzyme catalyses a neolactoside IV(2)-alpha-Fuc-nLc4Cer(d18:0) + H2O = a neolactoside nLc4Cer(d18:0) + L-fucose. Alpha-L-fucosidase is responsible for hydrolyzing the alpha-1,6-linked fucose joined to the reducing-end N-acetylglucosamine of the carbohydrate moieties of glycoproteins. This is Tissue alpha-L-fucosidase (FUCA1) from Bos taurus (Bovine).